Consider the following 99-residue polypeptide: Putative RNA-binding protein RbpE (99 aa).

Residues 2 to 79 (SIYVGNLSYS…RVLKVNKARP (78 aa)) enclose the RRM domain. The tract at residues 78 to 99 (RPREEKGARSGGGSWSRNNGGY) is disordered. Residues 86 to 99 (RSGGGSWSRNNGGY) show a composition bias toward gly residues.

The chain is Putative RNA-binding protein RbpE (rbpE) from Nostoc sp. (strain PCC 7120 / SAG 25.82 / UTEX 2576).